The sequence spans 188 residues: Large ribosomal subunit protein eL18 (188 aa).

K119 is covalently cross-linked (Glycyl lysine isopeptide (Lys-Gly) (interchain with G-Cter in SUMO2)). S130 carries the phosphoserine modification. The disordered stretch occupies residues 150-188; it reads RHFGKAPGTPHSHTKPYVRSKGRKFERARGRRASRGYKN. A Phosphothreonine modification is found at T158. Basic residues-rich tracts occupy residues 161–171 and 178–188; these read SHTKPYVRSKG and RGRRASRGYKN. A Glycyl lysine isopeptide (Lys-Gly) (interchain with G-Cter in SUMO2) cross-link involves residue K164.

The protein belongs to the eukaryotic ribosomal protein eL18 family. As to quaternary structure, component of the large ribosomal subunit.

Its subcellular location is the cytoplasm. It is found in the cytosol. It localises to the rough endoplasmic reticulum. In terms of biological role, component of the large ribosomal subunit. The ribosome is a large ribonucleoprotein complex responsible for the synthesis of proteins in the cell. The protein is Large ribosomal subunit protein eL18 (Rpl18) of Rattus norvegicus (Rat).